A 360-amino-acid polypeptide reads, in one-letter code: Phosphate acyltransferase (360 aa).

The protein belongs to the PlsX family. As to quaternary structure, homodimer. Probably interacts with PlsY.

It localises to the cytoplasm. The enzyme catalyses a fatty acyl-[ACP] + phosphate = an acyl phosphate + holo-[ACP]. Its pathway is lipid metabolism; phospholipid metabolism. Functionally, catalyzes the reversible formation of acyl-phosphate (acyl-PO(4)) from acyl-[acyl-carrier-protein] (acyl-ACP). This enzyme utilizes acyl-ACP as fatty acyl donor, but not acyl-CoA. This chain is Phosphate acyltransferase, found in Caulobacter vibrioides (strain ATCC 19089 / CIP 103742 / CB 15) (Caulobacter crescentus).